A 1468-amino-acid polypeptide reads, in one-letter code: DNA polymerase III PolC-type (1468 aa).

A disordered region spans residues 197-217 (QKSLEDSAPPSEEVTPTQNYD). Residues 430–586 (YVVFDVETTG…YDAEATGRLL (157 aa)) enclose the Exonuclease domain.

The protein belongs to the DNA polymerase type-C family. PolC subfamily.

Its subcellular location is the cytoplasm. The enzyme catalyses DNA(n) + a 2'-deoxyribonucleoside 5'-triphosphate = DNA(n+1) + diphosphate. Its function is as follows. Required for replicative DNA synthesis. This DNA polymerase also exhibits 3' to 5' exonuclease activity. In Streptococcus agalactiae serotype III (strain NEM316), this protein is DNA polymerase III PolC-type.